A 785-amino-acid chain; its full sequence is DNA ligase (785 aa).

NAD(+)-binding positions include 32 to 36 (DAEYD), 81 to 82 (SL), and E121. K123 (N6-AMP-lysine intermediate) is an active-site residue. Residues R144, E181, K297, and K321 each coordinate NAD(+). Residues C415, C418, C445, and C451 each contribute to the Zn(2+) site. In terms of domain architecture, BRCT spans 702–785 (VEGLPLAGET…AFLKGHGISA (84 aa)).

Belongs to the NAD-dependent DNA ligase family. LigA subfamily. Requires Mg(2+) as cofactor. Mn(2+) serves as cofactor.

It catalyses the reaction NAD(+) + (deoxyribonucleotide)n-3'-hydroxyl + 5'-phospho-(deoxyribonucleotide)m = (deoxyribonucleotide)n+m + AMP + beta-nicotinamide D-nucleotide.. DNA ligase that catalyzes the formation of phosphodiester linkages between 5'-phosphoryl and 3'-hydroxyl groups in double-stranded DNA using NAD as a coenzyme and as the energy source for the reaction. It is essential for DNA replication and repair of damaged DNA. The sequence is that of DNA ligase from Pseudomonas fluorescens (strain Pf0-1).